A 117-amino-acid chain; its full sequence is MIYTEFTILYKSSLPKYLRIMYFTSIGIFFHKLSIVSLEIVSSKTVNDLEIKLSLSFAVYTAFIIISLYMINSGNVTLLYNLSNIFDSILFRYISNRLLLPIFTSSIFNISFSHSNL.

This is an uncharacterized protein from Fowlpox virus (strain NVSL) (FPV).